A 322-amino-acid chain; its full sequence is Phospho-N-acetylmuramoyl-pentapeptide-transferase (322 aa).

The next 10 membrane-spanning stretches (helical) occupy residues 6 to 26 (ASCI…PLLI), 54 to 74 (TMGG…VTAW), 82 to 102 (VWIL…DDGI), 122 to 142 (IIIA…FGLY), 145 to 165 (FAGV…WLVG), 176 to 196 (LDGL…YIAF), 200 to 220 (NFAI…FFIF), 227 to 247 (IFMG…VSIM), 255 to 275 (LLVG…VISF), and 302 to 322 (VDIV…AIWG).

It belongs to the glycosyltransferase 4 family. MraY subfamily. It depends on Mg(2+) as a cofactor.

It is found in the cell membrane. It carries out the reaction UDP-N-acetyl-alpha-D-muramoyl-L-alanyl-gamma-D-glutamyl-L-lysyl-D-alanyl-D-alanine + di-trans,octa-cis-undecaprenyl phosphate = Mur2Ac(oyl-L-Ala-gamma-D-Glu-L-Lys-D-Ala-D-Ala)-di-trans,octa-cis-undecaprenyl diphosphate + UMP. It functions in the pathway cell wall biogenesis; peptidoglycan biosynthesis. Functionally, catalyzes the initial step of the lipid cycle reactions in the biosynthesis of the cell wall peptidoglycan: transfers peptidoglycan precursor phospho-MurNAc-pentapeptide from UDP-MurNAc-pentapeptide onto the lipid carrier undecaprenyl phosphate, yielding undecaprenyl-pyrophosphoryl-MurNAc-pentapeptide, known as lipid I. This is Phospho-N-acetylmuramoyl-pentapeptide-transferase from Lactobacillus helveticus (strain DPC 4571).